We begin with the raw amino-acid sequence, 97 residues long: Co-chaperonin GroES (97 aa).

It belongs to the GroES chaperonin family. Heptamer of 7 subunits arranged in a ring. Interacts with the chaperonin GroEL.

The protein resides in the cytoplasm. In terms of biological role, together with the chaperonin GroEL, plays an essential role in assisting protein folding. The GroEL-GroES system forms a nano-cage that allows encapsulation of the non-native substrate proteins and provides a physical environment optimized to promote and accelerate protein folding. GroES binds to the apical surface of the GroEL ring, thereby capping the opening of the GroEL channel. The chain is Co-chaperonin GroES from Aeromonas salmonicida.